The primary structure comprises 322 residues: ATP-dependent 6-phosphofructokinase (322 aa).

Glycine 12 is an ATP binding site. An ADP-binding site is contributed by 22–26 (RATAK). Residues 73-74 (RS) and 103-106 (GDGS) contribute to the ATP site. Mg(2+) is bound at residue aspartate 104. 127–129 (TID) contributes to the substrate binding site. Aspartate 129 (proton acceptor) is an active-site residue. An ADP-binding site is contributed by arginine 156. Substrate-binding positions include arginine 164 and 171–173 (MGR). Residues 187-189 (GGD) and 215-217 (KLH) each bind ADP. Residues glutamate 224, arginine 245, and 251–254 (HIQR) contribute to the substrate site.

Belongs to the phosphofructokinase type A (PFKA) family. ATP-dependent PFK group I subfamily. Prokaryotic clade 'B1' sub-subfamily. Homotetramer. Requires Mg(2+) as cofactor.

It is found in the cytoplasm. The catalysed reaction is beta-D-fructose 6-phosphate + ATP = beta-D-fructose 1,6-bisphosphate + ADP + H(+). It functions in the pathway carbohydrate degradation; glycolysis; D-glyceraldehyde 3-phosphate and glycerone phosphate from D-glucose: step 3/4. Allosterically activated by ADP and other diphosphonucleosides, and allosterically inhibited by phosphoenolpyruvate. Its function is as follows. Catalyzes the phosphorylation of D-fructose 6-phosphate to fructose 1,6-bisphosphate by ATP, the first committing step of glycolysis. This is ATP-dependent 6-phosphofructokinase from Fusobacterium nucleatum subsp. nucleatum (strain ATCC 25586 / DSM 15643 / BCRC 10681 / CIP 101130 / JCM 8532 / KCTC 2640 / LMG 13131 / VPI 4355).